A 224-amino-acid polypeptide reads, in one-letter code: Probable GTP-binding protein EngB (224 aa).

The EngB-type G domain maps to 31–204 (VGVEIAFAGR…LGILDQWCKP (174 aa)). Residues 39–46 (GRSNAGKS), 65–69 (GRTQL), 83–86 (DLPG), 150–153 (TKAD), and 183–185 (FSS) each bind GTP. Mg(2+) is bound by residues S46 and T67.

Belongs to the TRAFAC class TrmE-Era-EngA-EngB-Septin-like GTPase superfamily. EngB GTPase family. Requires Mg(2+) as cofactor.

Necessary for normal cell division and for the maintenance of normal septation. This Shewanella piezotolerans (strain WP3 / JCM 13877) protein is Probable GTP-binding protein EngB.